A 431-amino-acid polypeptide reads, in one-letter code: GDP-L-galactose phosphorylase 2 (431 aa).

Histidine 235 acts as the Tele-GMP-histidine intermediate in catalysis. Residues 398–407 (EEEEEEELEE) are compositionally biased toward acidic residues. The disordered stretch occupies residues 398–417 (EEEEEEELEEQNSMNGGSFT).

This sequence belongs to the GDPGP1 family. In terms of assembly, interacts with TLP1. As to expression, expressed in leaves, stems, roots, flowers and siliques.

The protein localises to the cytoplasm. Its subcellular location is the nucleus. The catalysed reaction is GDP-beta-L-galactose + phosphate = beta-L-galactose 1-phosphate + GDP + H(+). Its pathway is cofactor biosynthesis; L-ascorbate biosynthesis via GDP-alpha-D-mannose pathway; L-ascorbate from GDP-alpha-D-mannose: step 2/5. In terms of biological role, catalyzes a reaction of the Smirnoff-Wheeler pathway, the major route to ascorbate biosynthesis in plants. Acts as a phosphorylase rather than as a transferase. Uses preferentially GDP-L-galactose and GDP-D-glucose as substrates. Lower activity with GDP-L-fucose, very low activity with GDP-D-mannose, and no activity with UDP-D-glucose, UDP-D-galactose or ADP-D-glucose. Highly specific for inorganic phosphate as the guanylyl acceptor. This chain is GDP-L-galactose phosphorylase 2 (VTC5), found in Arabidopsis thaliana (Mouse-ear cress).